A 174-amino-acid chain; its full sequence is CASP-like protein 4D2 (174 aa).

Residues 1 to 14 (MAPPPPSPPPVSLK) are Cytoplasmic-facing. The chain crosses the membrane as a helical span at residues 15-35 (VSLLLLRVLTGVFLVIALIIL). Residues 36-60 (STNSVTIVSQGSALKFHFKDVYAYR) are Extracellular-facing. The helical transmembrane segment at 61–81 (YMLSAAVIGLLYAVIQLFFTI) threads the bilayer. Residues 82–150 (SEFATGMKNP…FFSRGYASAS (69 aa)) are Cytoplasmic-facing. A helical membrane pass occupies residues 151 to 171 (LLLFSFICLAVLSVFSSLAIA). Residues 172 to 174 (KRN) lie on the Extracellular side of the membrane.

Belongs to the Casparian strip membrane proteins (CASP) family. Homodimer and heterodimers.

Its subcellular location is the cell membrane. In Arabidopsis lyrata subsp. lyrata (Lyre-leaved rock-cress), this protein is CASP-like protein 4D2.